The primary structure comprises 205 residues: Small ribosomal subunit protein uS4 (205 aa).

Positions 19–45 (IWGRPKSPVNRREYGPGQHGQRRKGKL) are disordered. Residues 94-157 (RRLDAVVYRA…KQLAFVLEAS (64 aa)) enclose the S4 RNA-binding domain.

Part of the 30S ribosomal subunit. Contacts protein S5. The interaction surface between S4 and S5 is involved in control of translational fidelity. Post-translationally, may be methylated on an undetermined residue.

In terms of biological role, one of the primary rRNA binding proteins, it binds directly to 16S rRNA where it nucleates assembly of the body of the 30S subunit. With S5 and S12 plays an important role in translational accuracy. The sequence is that of Small ribosomal subunit protein uS4 from Rhodopseudomonas palustris (strain ATCC BAA-98 / CGA009).